The primary structure comprises 232 residues: uncharacterized protein (232 aa).

2 disordered regions span residues 123–147 and 169–200; these read VAGG…RKYP and AAAD…PSLR.

This sequence belongs to the mycobacterial PPE family.

This is an uncharacterized protein from Mycobacterium tuberculosis (strain ATCC 25618 / H37Rv).